The sequence spans 405 residues: uncharacterized protein (405 aa).

Positions 1–20 (MKAKLALSIIGLVLASLVAG) are cleaved as a signal peptide. Cys21 is subject to N-acetylcysteine. A lipid anchor (S-archaeol cysteine) is attached at Cys21.

It belongs to the BMP lipoprotein family.

Its subcellular location is the cell membrane. This is an uncharacterized protein from Pyrococcus horikoshii (strain ATCC 700860 / DSM 12428 / JCM 9974 / NBRC 100139 / OT-3).